The primary structure comprises 414 residues: L-cysteine:1D-myo-inositol 2-amino-2-deoxy-alpha-D-glucopyranoside ligase (414 aa).

Positions 1 to 38 (MRSWPAPEVPNLPEAGLPGPALPLHLHDTATGTVRPTR) are disordered. Low complexity predominate over residues 11–38 (NLPEAGLPGPALPLHLHDTATGTVRPTR). Cysteine 48 is a Zn(2+) binding site. Residues 48-51 (CGIT), threonine 63, and 86-88 (NVT) each bind L-cysteinyl-5'-AMP. A 'HIGH' region motif is present at residues 50 to 60 (ITPYDATHLGH). Residues 188 to 193 (ERGGDP) carry the 'ERGGDP' region motif. Tryptophan 228 lines the L-cysteinyl-5'-AMP pocket. A Zn(2+)-binding site is contributed by cysteine 232. 250–252 (GSD) is an L-cysteinyl-5'-AMP binding site. Residue histidine 257 coordinates Zn(2+). Valine 284 is an L-cysteinyl-5'-AMP binding site. Positions 290-294 (KMSKS) match the 'KMSKS' region motif.

This sequence belongs to the class-I aminoacyl-tRNA synthetase family. MshC subfamily. Monomer. Zn(2+) serves as cofactor.

It carries out the reaction 1D-myo-inositol 2-amino-2-deoxy-alpha-D-glucopyranoside + L-cysteine + ATP = 1D-myo-inositol 2-(L-cysteinylamino)-2-deoxy-alpha-D-glucopyranoside + AMP + diphosphate + H(+). In terms of biological role, catalyzes the ATP-dependent condensation of GlcN-Ins and L-cysteine to form L-Cys-GlcN-Ins. The sequence is that of L-cysteine:1D-myo-inositol 2-amino-2-deoxy-alpha-D-glucopyranoside ligase from Thermomonospora curvata (strain ATCC 19995 / DSM 43183 / JCM 3096 / KCTC 9072 / NBRC 15933 / NCIMB 10081 / Henssen B9).